The following is a 481-amino-acid chain: Aspartyl/glutamyl-tRNA(Asn/Gln) amidotransferase subunit B (481 aa).

This sequence belongs to the GatB/GatE family. GatB subfamily. In terms of assembly, heterotrimer of A, B and C subunits.

The enzyme catalyses L-glutamyl-tRNA(Gln) + L-glutamine + ATP + H2O = L-glutaminyl-tRNA(Gln) + L-glutamate + ADP + phosphate + H(+). The catalysed reaction is L-aspartyl-tRNA(Asn) + L-glutamine + ATP + H2O = L-asparaginyl-tRNA(Asn) + L-glutamate + ADP + phosphate + 2 H(+). Functionally, allows the formation of correctly charged Asn-tRNA(Asn) or Gln-tRNA(Gln) through the transamidation of misacylated Asp-tRNA(Asn) or Glu-tRNA(Gln) in organisms which lack either or both of asparaginyl-tRNA or glutaminyl-tRNA synthetases. The reaction takes place in the presence of glutamine and ATP through an activated phospho-Asp-tRNA(Asn) or phospho-Glu-tRNA(Gln). The polypeptide is Aspartyl/glutamyl-tRNA(Asn/Gln) amidotransferase subunit B (Fusobacterium nucleatum subsp. nucleatum (strain ATCC 25586 / DSM 15643 / BCRC 10681 / CIP 101130 / JCM 8532 / KCTC 2640 / LMG 13131 / VPI 4355)).